The following is a 227-amino-acid chain: Transcription elongation factor A protein-like 2 (227 aa).

Disordered stretches follow at residues 1–145 (MEKL…TNKG) and 202–227 (FYPR…IPYV). 5 stretches are compositionally biased toward basic and acidic residues: residues 18–43 (IDNE…KLEN), 50–82 (TGKR…KGKS), 90–113 (TEGK…REPE), 120–136 (SETR…DIPR), and 206–227 (GPRE…IPYV).

It belongs to the TFS-II family. TFA subfamily.

The protein resides in the nucleus. In terms of biological role, may be involved in transcriptional regulation. The protein is Transcription elongation factor A protein-like 2 (TCEAL2) of Homo sapiens (Human).